A 362-amino-acid chain; its full sequence is Peptide chain release factor 1 (362 aa).

Q235 carries the post-translational modification N5-methylglutamine.

This sequence belongs to the prokaryotic/mitochondrial release factor family. In terms of processing, methylated by PrmC. Methylation increases the termination efficiency of RF1.

The protein resides in the cytoplasm. Its function is as follows. Peptide chain release factor 1 directs the termination of translation in response to the peptide chain termination codons UAG and UAA. In Buchnera aphidicola subsp. Baizongia pistaciae (strain Bp), this protein is Peptide chain release factor 1.